Here is a 192-residue protein sequence, read N- to C-terminus: Phosphoheptose isomerase (192 aa).

An SIS domain is found at 36–192; sequence CVDSLAAGGK…DQVEAVAAPA (157 aa). 51–53 contacts substrate; that stretch reads NGG. Zn(2+)-binding residues include His60 and Glu64. Substrate is bound by residues Glu64, 93–94, 119–121, Ser124, and Gln171; these read ND and TTS. Zn(2+) is bound by residues Gln171 and His179.

This sequence belongs to the SIS family. GmhA subfamily. In terms of assembly, homotetramer. It depends on Zn(2+) as a cofactor.

The protein localises to the cytoplasm. It carries out the reaction 2 D-sedoheptulose 7-phosphate = D-glycero-alpha-D-manno-heptose 7-phosphate + D-glycero-beta-D-manno-heptose 7-phosphate. Its pathway is carbohydrate biosynthesis; D-glycero-D-manno-heptose 7-phosphate biosynthesis; D-glycero-alpha-D-manno-heptose 7-phosphate and D-glycero-beta-D-manno-heptose 7-phosphate from sedoheptulose 7-phosphate: step 1/1. Functionally, catalyzes the isomerization of sedoheptulose 7-phosphate in D-glycero-D-manno-heptose 7-phosphate. This is Phosphoheptose isomerase from Paramagnetospirillum magneticum (strain ATCC 700264 / AMB-1) (Magnetospirillum magneticum).